The primary structure comprises 152 residues: Nucleoside diphosphate kinase A 1 (152 aa).

Residues K12, F60, R88, T94, R105, and N115 each contribute to the ATP site. The active-site Pros-phosphohistidine intermediate is the H118.

Belongs to the NDK family. In terms of assembly, homohexamer. Mg(2+) is required as a cofactor. Post-translationally, the N-terminus is blocked.

Its subcellular location is the cytoplasm. It localises to the cell membrane. The protein localises to the nucleus. The enzyme catalyses a 2'-deoxyribonucleoside 5'-diphosphate + ATP = a 2'-deoxyribonucleoside 5'-triphosphate + ADP. It carries out the reaction a ribonucleoside 5'-diphosphate + ATP = a ribonucleoside 5'-triphosphate + ADP. Its activity is regulated as follows. Autophosphorylation at His-118 increases serine/threonine protein kinase activity of the enzyme. Interaction with the SET complex inhibits exonuclease activity. In terms of biological role, major role in the synthesis of nucleoside triphosphates other than ATP. Possesses nucleoside-diphosphate kinase, serine/threonine-specific protein kinase, geranyl and farnesyl pyrophosphate kinase, histidine protein kinase and 3'-5' exonuclease activities. Involved in cell proliferation, differentiation and development, signal transduction, G protein-coupled receptor endocytosis, and gene expression. Required for neural development including neural patterning and cell fate determination. This chain is Nucleoside diphosphate kinase A 1 (NME1-1), found in Bos taurus (Bovine).